The chain runs to 377 residues: MNKVLIIGSGFSGATIARLLAEENIKVKIIDDRKHIGGNCYDERDEKTGINVHVYGPHIFHTDNEDVWNFVNKYGTFQPYTTRLKANAKGQIYSLPVNLHTINQYYKTALSPTEARKLIASKGDQTINDPQSFEEQALKFVGEDLYKTFFYGYPKKQWGMEPKEIPASVLKRLPVRFNYDDNYFFHKFQGIPRDGYTPLFQNLLNHPNIEFELGKKVNRATVEELITSEQYGHVFFSGAIDHFYDYEFGMLQYRTLDFEKFYSEDDDYQGCVVMSYCDEDVPYTRVTEHKYFTPWEEHKGSVLYKEFSRSCDKEDIPYYPVRLVSGNSIWNKYEQKAKEETNITFIGRLATYRYLDMDVCIKEAIECAQLYIKNNKE.

FAD-binding positions include Ser12, 31–32 (DD), Asn39, 58–59 (HI), Arg348, and 355–360 (LDMDVC).

This sequence belongs to the UDP-galactopyranose/dTDP-fucopyranose mutase family. It depends on FAD as a cofactor.

It catalyses the reaction dTDP-alpha-D-fucose = dTDP-alpha-D-fucofuranose. Its pathway is bacterial outer membrane biogenesis; LPS O-antigen biosynthesis. Its activity is regulated as follows. Inhibited by Cu(2+), while other divalent cations such as Ca(2+), Co(2+), Fe(2+) and Mg(2+) have no obvious effects on enzyme activity. Catalyzes the conversion of dTDP-alpha-D-fucopyranose to dTDP-alpha-D-fucofuranose. This is a step in the biosynthesis of D-fucofuranose, a component of E.coli O52 O antigen. The polypeptide is dTDP-fucopyranose mutase (fcf2) (Escherichia coli).